The following is a 189-amino-acid chain: Peptide deformylase (189 aa).

2 residues coordinate Fe cation: Cys-93 and His-135. The active site involves Glu-136. His-139 contacts Fe cation.

It belongs to the polypeptide deformylase family. Fe(2+) is required as a cofactor.

It catalyses the reaction N-terminal N-formyl-L-methionyl-[peptide] + H2O = N-terminal L-methionyl-[peptide] + formate. Functionally, removes the formyl group from the N-terminal Met of newly synthesized proteins. Requires at least a dipeptide for an efficient rate of reaction. N-terminal L-methionine is a prerequisite for activity but the enzyme has broad specificity at other positions. In Karelsulcia muelleri (strain GWSS) (Sulcia muelleri), this protein is Peptide deformylase.